Consider the following 1401-residue polypeptide: DNA-directed RNA polymerase subunit beta'' (1401 aa).

Residues C224, C294, C301, and C304 each contribute to the Zn(2+) site.

The protein belongs to the RNA polymerase beta' chain family. RpoC2 subfamily. In plastids the minimal PEP RNA polymerase catalytic core is composed of four subunits: alpha, beta, beta', and beta''. When a (nuclear-encoded) sigma factor is associated with the core the holoenzyme is formed, which can initiate transcription. Requires Zn(2+) as cofactor.

Its subcellular location is the plastid. It localises to the chloroplast. The enzyme catalyses RNA(n) + a ribonucleoside 5'-triphosphate = RNA(n+1) + diphosphate. Its function is as follows. DNA-dependent RNA polymerase catalyzes the transcription of DNA into RNA using the four ribonucleoside triphosphates as substrates. The polypeptide is DNA-directed RNA polymerase subunit beta'' (Nymphaea alba (White water-lily)).